The primary structure comprises 638 residues: Neuroendocrine convertase 2 (638 aa).

Positions 1 to 25 (MKGGCVSQWKAAAGFLFCVMVFASA) are cleaved as a signal peptide. The propeptide occupies 26–109 (ERPVFTNHFL…QQEGFDRKKR (84 aa)). In terms of domain architecture, Peptidase S8 spans 129 to 453 (QWYLINTGQA…YGVLDAGAMV (325 aa)). Residues D167 and H208 each act as charge relay system in the active site. 2 disulfide bridges follow: C225/C376 and C317/C347. An N-linked (GlcNAc...) asparagine glycan is attached at N375. S384 functions as the Charge relay system in the catalytic mechanism. In terms of domain architecture, P/Homo B spans 461 to 597 (TVPERFHCVG…TLMLHGTQSA (137 aa)). C468 and C494 are joined by a disulfide. N514 and N524 each carry an N-linked (GlcNAc...) asparagine glycan.

Belongs to the peptidase S8 family. Furin subfamily.

It is found in the cytoplasmic vesicle. Its subcellular location is the secretory vesicle. The protein resides in the secreted. The catalysed reaction is Release of protein hormones and neuropeptides from their precursors, generally by hydrolysis of -Lys-Arg-|- bonds.. In terms of biological role, serine endopeptidase which is involved in the processing of hormone and other protein precursors at sites comprised of pairs of basic amino acid residues. Responsible for the release of glucagon from proglucagon in pancreatic A cells. This Homo sapiens (Human) protein is Neuroendocrine convertase 2 (PCSK2).